The chain runs to 248 residues: ATP synthase subunit a, chloroplastic (248 aa).

5 helical membrane-spanning segments follow: residues 38–58 (QVLITSWVVIAILLGSATIVV), 96–116 (VPFIGTMFLFIFVSNWSGALL), 135–155 (INTTVALALPTSVAYFYAGIS), 200–220 (LVVVVLVSLVPSLVPIPVMFL), and 221–241 (GLFTSGIQALIFATLAAAYIG).

It belongs to the ATPase A chain family. F-type ATPases have 2 components, CF(1) - the catalytic core - and CF(0) - the membrane proton channel. CF(1) has five subunits: alpha(3), beta(3), gamma(1), delta(1), epsilon(1). CF(0) has four main subunits: a, b, b' and c.

The protein resides in the plastid. It is found in the chloroplast thylakoid membrane. Its function is as follows. Key component of the proton channel; it plays a direct role in the translocation of protons across the membrane. This is ATP synthase subunit a, chloroplastic from Amborella trichopoda.